Reading from the N-terminus, the 259-residue chain is Ribonuclease HII (259 aa).

The region spanning Val69–Tyr257 is the RNase H type-2 domain. Asp75, Glu76, and Asp167 together coordinate a divalent metal cation.

The protein belongs to the RNase HII family. Mn(2+) serves as cofactor. It depends on Mg(2+) as a cofactor.

It localises to the cytoplasm. It carries out the reaction Endonucleolytic cleavage to 5'-phosphomonoester.. Functionally, endonuclease that specifically degrades the RNA of RNA-DNA hybrids. The sequence is that of Ribonuclease HII from Shouchella clausii (strain KSM-K16) (Alkalihalobacillus clausii).